The following is a 241-amino-acid chain: 1-(5-phosphoribosyl)-5-[(5-phosphoribosylamino)methylideneamino] imidazole-4-carboxamide isomerase (241 aa).

Aspartate 8 acts as the Proton acceptor in catalysis. The active-site Proton donor is the aspartate 130.

The protein belongs to the HisA/HisF family.

It localises to the cytoplasm. The enzyme catalyses 1-(5-phospho-beta-D-ribosyl)-5-[(5-phospho-beta-D-ribosylamino)methylideneamino]imidazole-4-carboxamide = 5-[(5-phospho-1-deoxy-D-ribulos-1-ylimino)methylamino]-1-(5-phospho-beta-D-ribosyl)imidazole-4-carboxamide. Its pathway is amino-acid biosynthesis; L-histidine biosynthesis; L-histidine from 5-phospho-alpha-D-ribose 1-diphosphate: step 4/9. This is 1-(5-phosphoribosyl)-5-[(5-phosphoribosylamino)methylideneamino] imidazole-4-carboxamide isomerase from Flavobacterium psychrophilum (strain ATCC 49511 / DSM 21280 / CIP 103535 / JIP02/86).